A 1258-amino-acid chain; its full sequence is Ice nucleation protein (1258 aa).

Positions 162–1217 are octapeptide periodicity; sequence ATYGSTLSGT…LTAGENSVLI (1056 aa). 5 disordered regions span residues 260–287, 311–342, 356–383, 407–438, and 452–480; these read YGST…KGSD, TQTA…GYGS, and YGST…GSDL. Composition is skewed to polar residues over residues 261–286, 311–334, 357–382, 407–430, and 453–480; these read GSTQ…QKGS, TQTA…QKGS, and GSTQ…GSDL.

Belongs to the bacterial ice nucleation protein family.

Its subcellular location is the cell outer membrane. Functionally, ice nucleation proteins enable bacteria to nucleate crystallization in supercooled water. In Enterobacter agglomerans (Erwinia herbicola), this protein is Ice nucleation protein (iceE).